The following is a 347-amino-acid chain: tRNA N6-adenosine threonylcarbamoyltransferase (347 aa).

The Fe cation site is built by H115 and H119. Residues 137 to 141 (LASGG), D170, G183, and N281 contribute to the substrate site. Position 309 (D309) interacts with Fe cation.

This sequence belongs to the KAE1 / TsaD family. Requires Fe(2+) as cofactor.

It is found in the cytoplasm. The enzyme catalyses L-threonylcarbamoyladenylate + adenosine(37) in tRNA = N(6)-L-threonylcarbamoyladenosine(37) in tRNA + AMP + H(+). Required for the formation of a threonylcarbamoyl group on adenosine at position 37 (t(6)A37) in tRNAs that read codons beginning with adenine. Is involved in the transfer of the threonylcarbamoyl moiety of threonylcarbamoyl-AMP (TC-AMP) to the N6 group of A37, together with TsaE and TsaB. TsaD likely plays a direct catalytic role in this reaction. This Methylorubrum populi (strain ATCC BAA-705 / NCIMB 13946 / BJ001) (Methylobacterium populi) protein is tRNA N6-adenosine threonylcarbamoyltransferase.